A 526-amino-acid chain; its full sequence is Fusicoccadiene 8-ol C-16-hydroxylase (526 aa).

A helical transmembrane segment spans residues 34–56 (AFVGFSVLGLTLLFSKLFYNAYL). N-linked (GlcNAc...) asparagine glycosylation is found at Asn-309, Asn-418, and Asn-434. Residue Cys-470 participates in heme binding.

The protein belongs to the cytochrome P450 family. Heme serves as cofactor.

The protein resides in the membrane. Its pathway is mycotoxin biosynthesis. Cytochrome P450 monooxygenase; part of the 2 gene clusters that mediate the biosynthesis of fusicoccins, diterpene glucosides that display phytohormone-like activity and function as potent activators of plasma membrane H(+)-ATPases in plants by modifying 14-3-3 proteins and cause the plant disease constriction canker. The first step in the pathway is performed by the fusicoccadiene synthase PaFS that possesses both prenyl transferase and terpene cyclase activity, converting isopentenyl diphosphate and dimethylallyl diphosphate into geranylgeranyl diphosphate (GGDP) and successively converting GGDP into fusicocca-2,10(14)-diene, a precursor for fusicoccin H. The second step is the oxidation at the C-8 position by the cytochrome P450 monooxygenase PaP450-2 to yield fusicocca-2,10(14)-diene-8-beta-ol. The cytochrome P450 monooxygenase PaP450-1 then catalyzes the hydroxylation at the C-16 position to produce fusicocca-2,10(14)-diene-8-beta,16-diol. The dioxygenase fc-dox then catalyzes the 16-oxydation of fusicocca-2,10(14)-diene-8-beta,16-diol to yield an aldehyde (8-beta-hydroxyfusicocca-1,10(14)-dien-16-al). The short-chain dehydrogenase/reductase fc-sdr catalyzes the reduction of the aldehyde to yield fusicocca-1,10(14)-diene-8-beta,16-diol. The next step is the hydroxylation at C-9 performed by the cytochrome P450 monooxygenase PaP450-3 that leads to fusicoccin H aglycon which is glycosylated to fusicoccin H by the O-glycosyltransferase PaGT. Hydroxylation at C-12 by the cytochrome P450 monooxygenase PaP450-4 leads then to the production of fusicoccin Q and is followed by methylation by the O-methyltransferase PaMT to yield fusicoccin P. Fusicoccin P is further converted to fusicoccin J via prenylation by the O-glucose prenyltransferase PaPT. Cytochrome P450 monooxygenase PaP450-5 then performs hydroxylation at C-19 to yield dideacetyl-fusicoccin A which is acetylated to 3'-O-deacetyl-fusicoccin A by the O-acetyltransferase PaAT-2. Finally, a another acetylation by the O-acetyltransferase PaAT-1 yields fusicoccin A. The protein is Fusicoccadiene 8-ol C-16-hydroxylase of Phomopsis amygdali (Fusicoccum amygdali).